Consider the following 346-residue polypeptide: MDSYDAPELTPRQDASSRLKDFFVGATPLQKRLESVRKQTSFIPTPPRRKIPQGSQLQEDVDPQKFAFLLHKQWTLYSLTPLYKFSYTNFKEYSKLLNAFIAAEKQKGLAVEVGDDFNIKVVFSTLMGVKGTQRDPEAFLVQILSKSQLPSEHKEGKVLWTGWFCCVFGDSLLETVSEDFTCLPLFLVNGAETNTAIIGTWFQKTFDCYFRPLAINAFNLSWMAAMWTACKMDHYMATTEFLWSVPCSPHSLDISYAIHPEDAKALWDSVHKTPGEVTQEEVDLFMDCLYSHFHRHFKIHLSATRLVRVSTSVASAHTDGKIKILCPKYLIGVLAYLTELAVFQIE.

Serine 41 is subject to Phosphoserine. Threonine 45 is subject to Phosphothreonine. Serine 55 carries the post-translational modification Phosphoserine.

It belongs to the CENP-L/IML3 family. Component of the CENPA-CAD complex, composed of CENPI, CENPK, CENPL, CENPO, CENPP, CENPQ, CENPR and CENPS. The CENPA-CAD complex interacts with the CENPA-NAC complex, at least composed of CENPA, CENPC, CENPH, CENPM, CENPN, CENPT and CENPU.

It is found in the nucleus. The protein localises to the chromosome. The protein resides in the centromere. Component of the CENPA-CAD (nucleosome distal) complex, a complex recruited to centromeres which is involved in assembly of kinetochore proteins, mitotic progression and chromosome segregation. May be involved in incorporation of newly synthesized CENPA into centromeres via its interaction with the CENPA-NAC complex. The chain is Centromere protein L (CENPL) from Bos taurus (Bovine).